Reading from the N-terminus, the 454-residue chain is tRNA modification GTPase MnmE (454 aa).

(6S)-5-formyl-5,6,7,8-tetrahydrofolate is bound by residues Arg23, Glu80, and Lys120. The region spanning 216 to 377 (GMKVVIAGRP…LRNHLKQSMG (162 aa)) is the TrmE-type G domain. Asn226 lines the K(+) pocket. Residues 226-231 (NAGKSS), 245-251 (TDIAGTT), 270-273 (DTAG), 335-338 (NKAD), and 358-360 (SAR) contribute to the GTP site. Residue Ser230 participates in Mg(2+) binding. Residues Thr245, Ile247, and Thr250 each coordinate K(+). Thr251 is a binding site for Mg(2+). (6S)-5-formyl-5,6,7,8-tetrahydrofolate is bound at residue Lys454.

Belongs to the TRAFAC class TrmE-Era-EngA-EngB-Septin-like GTPase superfamily. TrmE GTPase family. As to quaternary structure, homodimer. Heterotetramer of two MnmE and two MnmG subunits. It depends on K(+) as a cofactor.

The protein resides in the cytoplasm. Exhibits a very high intrinsic GTPase hydrolysis rate. Involved in the addition of a carboxymethylaminomethyl (cmnm) group at the wobble position (U34) of certain tRNAs, forming tRNA-cmnm(5)s(2)U34. The protein is tRNA modification GTPase MnmE of Escherichia coli O139:H28 (strain E24377A / ETEC).